Consider the following 792-residue polypeptide: Xaa-Pro dipeptidyl-peptidase (792 aa).

Active-site charge relay system residues include S363, D482, and H513.

This sequence belongs to the peptidase S15 family. In terms of assembly, homodimer.

Its subcellular location is the cytoplasm. It carries out the reaction Hydrolyzes Xaa-Pro-|- bonds to release unblocked, N-terminal dipeptides from substrates including Ala-Pro-|-p-nitroanilide and (sequentially) Tyr-Pro-|-Phe-Pro-|-Gly-Pro-|-Ile.. Removes N-terminal dipeptides sequentially from polypeptides having unsubstituted N-termini provided that the penultimate residue is proline. The polypeptide is Xaa-Pro dipeptidyl-peptidase (Lactobacillus delbrueckii subsp. bulgaricus (strain ATCC 11842 / DSM 20081 / BCRC 10696 / JCM 1002 / NBRC 13953 / NCIMB 11778 / NCTC 12712 / WDCM 00102 / Lb 14)).